An 87-amino-acid chain; its full sequence is Mu-theraphotoxin-Cg1a (87 aa).

The first 21 residues, 1-21 (MKVLVLITLAVLGAMFVWTSA), serve as a signal peptide directing secretion. A propeptide spanning residues 22-50 (AELEERGSDQRDSPAWVKSMERIFQSEER) is cleaved from the precursor. 3 cysteine pairs are disulfide-bonded: C52–C66, C59–C71, and C65–C79.

It belongs to the neurotoxin 10 (Hwtx-1) family. 39 (Jztx-34) subfamily. As to expression, expressed by the venom gland.

The protein localises to the secreted. Potent and selective inhibitor of hNav1.7/SCN9A (IC(50)=610 nM). Also shows a weak activity towards Nav1.3/SCN3A (IC(50)=7950 nM). In addition, inhibits voltage-gated potassium channels (Kv) in rat DRG neurons. It does not alter the voltage dependence of activation, but it causes a small hyperpolarizing shift in the steady-state inactivations of Nav1.7/SNC9A. Chimera experiments show that the toxin binds to the DIIS3-S4 linker (site 4) of Nav1.7/SCN9A, whereas Nav1.7/SCN9A Asp-827 residue is shown by substitution experiments to be critical for its sensitivity. The toxin traps the domain II voltage sensor in the closed configuration, and not in an outward position. In vivo, shows analgesic activity in three rodent pain models (formalin-induced, acid-induced, and thermal). The protein is Mu-theraphotoxin-Cg1a of Chilobrachys guangxiensis (Chinese earth tiger tarantula).